The following is a 748-amino-acid chain: Polyribonucleotide nucleotidyltransferase (748 aa).

Residues Asp487 and Asp493 each coordinate Mg(2+). The region spanning 554 to 613 is the KH domain; it reads PSTTTIKIDKDKIRDIIGPGGKVIKEICETSGAKIDISDDGTVSVYASDRDKLKVALDKI. In terms of domain architecture, S1 motif spans 623 to 691; sequence GEIFNGTVVK…NKGKAKLTIK (69 aa). Positions 691–748 are disordered; that stretch reads KNADKDKSSNNTKPKTNVNNTKDNSEPEQRRDSSKKRAWNEDNNAETAEVITERKYFN. The span at 699–712 shows a compositional bias: low complexity; sequence SNNTKPKTNVNNTK. Over residues 713–722 the composition is skewed to basic and acidic residues; it reads DNSEPEQRRD.

It belongs to the polyribonucleotide nucleotidyltransferase family. It depends on Mg(2+) as a cofactor.

It is found in the cytoplasm. The enzyme catalyses RNA(n+1) + phosphate = RNA(n) + a ribonucleoside 5'-diphosphate. In terms of biological role, involved in mRNA degradation. Catalyzes the phosphorolysis of single-stranded polyribonucleotides processively in the 3'- to 5'-direction. The chain is Polyribonucleotide nucleotidyltransferase from Rickettsia africae (strain ESF-5).